The chain runs to 82 residues: Acyl carrier protein (82 aa).

The Carrier domain maps to 4–79; it reads PEMESRLKKI…DALNYIEQKL (76 aa). Ser39 carries the post-translational modification O-(pantetheine 4'-phosphoryl)serine.

The protein belongs to the acyl carrier protein (ACP) family. Post-translationally, 4'-phosphopantetheine is transferred from CoA to a specific serine of apo-ACP by AcpS. This modification is essential for activity because fatty acids are bound in thioester linkage to the sulfhydryl of the prosthetic group.

The protein resides in the cytoplasm. It functions in the pathway lipid metabolism; fatty acid biosynthesis. Functionally, carrier of the growing fatty acid chain in fatty acid biosynthesis. This is Acyl carrier protein from Roseiflexus sp. (strain RS-1).